A 307-amino-acid chain; its full sequence is MAVQKYTVALFLVALVVGPAASYAADLSYGAPATPAAPAAGYTPAAPAGAAPKATTDEQKMIEKINVGFKAAVAAAGGVPAANKYKTFVATFGAASNKAFAEALSTEPKGAAVDSSKAALTSKLDAAYKLAYKSAEGATPEAKYDDYVATLSEALRIIAGTLEVHGVKPAAEEVKATPAGELQVIDKVDAAFKVAATAANAAPANDKFTVFEAAFNDAIKASTGGAYQSYKFIPALEAAVKQSYAATVATAPAVKYTVFETALKKAITAMSQAQKAAKPAAAATGTATAAVGAATGAATAAAGGYKV.

An N-terminal signal peptide occupies residues 1–22; that stretch reads MAVQKYTVALFLVALVVGPAAS.

The protein belongs to the Poa p IX/Phl p VI allergen family. Pollen.

The chain is Pollen allergen KBG 60 from Poa pratensis (Kentucky bluegrass).